A 431-amino-acid polypeptide reads, in one-letter code: Large envelope protein (431 aa).

The N-myristoyl glycine; by host moiety is linked to residue glycine 2. The interval 2 to 148 (GNNIKVTFNP…PPLRDTHPHL (147 aa)) is pre-S1. The interval 2–207 (GNNIKVTFNP…PSTTGDPALS (206 aa)) is pre-S. The Virion surface; in external conformation segment spans residues 2-214 (GNNIKVTFNP…ALSPEMSPSS (213 aa)). At 2-286 (GNNIKVTFNP…NGFRWMYLRR (285 aa)) the chain is on the intravirion; in internal conformation side. The N-linked (GlcNAc...) asparagine glycan is linked to asparagine 3. Residues 115 to 147 (IPRGLVPPQTPTNRDQGRKPTPPTPPLRDTHPH) form a disordered region. The interval 149 to 207 (TMKNQTFHLQGFVDGLRDLTTTERQHNAYGDPFTTLSPAVPTVSTILSPPSTTGDPALS) is pre-S2. A helical transmembrane segment spans residues 215–235 (LLGLLAGLQVVYFLWTKILTI). Residues 236–286 (AQNLDWWWTSLSFPGGIPECTGQNSQFQTCKHLPTSCPPTCNGFRWMYLRR) are Intravirion; in external conformation-facing. The chain crosses the membrane as a helical span at residues 287 to 307 (FIIYLLVLLLCLIFLLVLLDW). The Virion surface segment spans residues 308 to 379 (KGLIPVCPLQ…WALARFSWLN (72 aa)). N-linked (GlcNAc...) asparagine; by host glycosylation occurs at asparagine 351. A helical membrane pass occupies residues 380–400 (LLVPLLQWLGGISLIAWFLLI). The Intravirion portion of the chain corresponds to 401-406 (WMIWFW). The helical transmembrane segment at 407–429 (GPALLSILPPFIPIFVLFFLIWV) threads the bilayer. The Virion surface portion of the chain corresponds to 430-431 (YI).

The protein belongs to the orthohepadnavirus major surface antigen family. As to quaternary structure, in its internal form (Li-HBsAg), interacts with the capsid protein and with the isoform S. Interacts with host chaperone CANX. Associates with host chaperone CANX through its pre-S2 N glycan; this association may be essential for isoform M proper secretion. In terms of assembly, interacts with isoform L. Interacts with the antigens of satellite virus HDV (HDVAgs); this interaction is required for encapsidation of HDV genomic RNA. Post-translationally, isoform M is N-terminally acetylated by host at a ratio of 90%, and N-glycosylated by host at the pre-S2 region. Myristoylated.

It is found in the virion membrane. The large envelope protein exists in two topological conformations, one which is termed 'external' or Le-HBsAg and the other 'internal' or Li-HBsAg. In its external conformation the protein attaches the virus to cell receptors and thereby initiating infection. This interaction determines the species specificity and liver tropism. This attachment induces virion internalization predominantly through caveolin-mediated endocytosis. The large envelope protein also assures fusion between virion membrane and endosomal membrane. In its internal conformation the protein plays a role in virion morphogenesis and mediates the contact with the nucleocapsid like a matrix protein. In terms of biological role, the middle envelope protein plays an important role in the budding of the virion. It is involved in the induction of budding in a nucleocapsid independent way. In this process the majority of envelope proteins bud to form subviral lipoprotein particles of 22 nm of diameter that do not contain a nucleocapsid. The sequence is that of Large envelope protein from Woodchuck hepatitis B virus (isolate 7) (WHV).